A 943-amino-acid polypeptide reads, in one-letter code: Translation initiation factor IF-2 (943 aa).

Residues 29–357 form a disordered region; it reads LSVKSHSSSV…KPVTERKFHE (329 aa). Composition is skewed to basic and acidic residues over residues 69 to 82, 112 to 137, 145 to 155, 163 to 196, and 224 to 253; these read PKEEKVEPKVDKAS, FKAEREARAKAEAERRKNGGGRDNRN, QGKRHNNDRRN, DHNKGNRDNSTNHDRNFQGKLRNDQNQNNRRDNA, and RQSETRFREEKAAEQRRAKEQEKARKEKQQ. Residues 254-266 show a composition bias toward low complexity; that stretch reads AEVAVQKAAAETK. Residues 296-309 show a composition bias toward basic and acidic residues; the sequence is KSRDNRRVNEDGPK. The span at 313 to 332 shows a compositional bias: low complexity; the sequence is NNKWNNQNQVRNQRNSNWNK. Residues 445-614 form the tr-type G domain; it reads ERAPVVTIMG…LLVAEVEELK (170 aa). The interval 454-461 is G1; that stretch reads GHVDHGKT. 454 to 461 contributes to the GTP binding site; the sequence is GHVDHGKT. The interval 479-483 is G2; the sequence is GITQH. The G3 stretch occupies residues 500–503; that stretch reads DTPG. GTP contacts are provided by residues 500–504 and 554–557; these read DTPGH and NKID. Positions 554-557 are G4; the sequence is NKID. The segment at 590–592 is G5; the sequence is SAK.

The protein belongs to the TRAFAC class translation factor GTPase superfamily. Classic translation factor GTPase family. IF-2 subfamily.

Its subcellular location is the cytoplasm. Its function is as follows. One of the essential components for the initiation of protein synthesis. Protects formylmethionyl-tRNA from spontaneous hydrolysis and promotes its binding to the 30S ribosomal subunits. Also involved in the hydrolysis of GTP during the formation of the 70S ribosomal complex. The protein is Translation initiation factor IF-2 of Streptococcus thermophilus (strain CNRZ 1066).